Consider the following 55-residue polypeptide: DNA-binding protein (55 aa).

The tract at residues 1–55 is disordered; that stretch reads MVYRRRRRSSTGTTYGSTRRRRSSGYRRRPGRPRTYRRSRSRSSTGRRSYRTRYY. 2 tandem repeats follow at residues 5–10 and 19–24. The segment at 5–24 is 2 X 6 AA repeats of R-R-R-R-S-S; sequence RRRRSSTGTTYGSTRRRRSS. Basic residues predominate over residues 18–41; the sequence is TRRRRSSGYRRRPGRPRTYRRSRS.

In terms of assembly, interacts with protein AC132. In terms of processing, phosphorylated.

It is found in the virion. Its subcellular location is the host cytoplasm. In terms of biological role, plays a role in viral DNA packaging and nucleocapsid assembly. Promotes viral gene transcription during the late stage of infection while it is non-essential for the basal level of viral gene transcription. The polypeptide is DNA-binding protein (P6.9) (Lepidoptera (butterflies and moths)).